We begin with the raw amino-acid sequence, 575 residues long: DNA polymerase lambda (575 aa).

In terms of domain architecture, BRCT spans 36 to 132; that stretch reads EAEEWLSSLR…RLVDVAGFSI (97 aa). The tract at residues 160 to 205 is disordered; sequence ALLQTALPPPPSPTRPVSPPQKTKEAPNTQAQPISDDEASDGEETQ. A compositionally biased stretch (pro residues) spans 166–178; sequence LPPPPSPTRPVSP. The span at 194–203 shows a compositional bias: acidic residues; the sequence is SDDEASDGEE. Residues 265–279 form a DNA-binding region; the sequence is KAYSVQGDKWRALGY. The Schiff-base intermediate with DNA role is filled by Lys312. The segment at 345-348 is DNA-binding; it reads GTKT. DCTP is bound by residues Arg386, 417-420, and 426-429; these read SYRR and GDVD. The segment at 420 to 429 is involved in primer binding; that stretch reads RGKATCGDVD. Mn(2+) contacts are provided by Asp427, Asp429, and Asp490. A DNA-binding region spans residues 466-505; that stretch reads ENGQQQKYLGVCRLPGPGWRHRRLDIIVVPYSEFACALLY. Asn513 is a dCTP binding site.

Belongs to the DNA polymerase type-X family. Interacts with PCNA. Interacts with PAXX; promoting POLL recruitment to double-strand breaks (DSBs) and stimulation of the end-filling activity of POLL. Interacts with XRCC4; promoting POLL recruitment to double-strand breaks (DSBs) and stimulation of the end-filling activity of POLL. Interacts with NHEJ1/XLF; promoting POLL recruitment to double-strand breaks (DSBs) and stimulation of the end-filling activity of POLL. Requires Mn(2+) as cofactor.

The protein localises to the nucleus. The enzyme catalyses DNA(n) + a 2'-deoxyribonucleoside 5'-triphosphate = DNA(n+1) + diphosphate. Functionally, DNA polymerase that functions in several pathways of DNA repair. Involved in base excision repair (BER) responsible for repair of lesions that give rise to abasic (AP) sites in DNA. Also contributes to DNA double-strand break repair by non-homologous end joining and homologous recombination. Has both template-dependent and template-independent (terminal transferase) DNA polymerase activities. Also has a 5'-deoxyribose-5-phosphate lyase (dRP lyase) activity. The polypeptide is DNA polymerase lambda (Macaca fascicularis (Crab-eating macaque)).